Reading from the N-terminus, the 467-residue chain is Mothers against decapentaplegic homolog 2 (467 aa).

At S2 the chain carries N-acetylserine. T8 is subject to Phosphothreonine. An MH1 domain is found at 10–176 (PVVKRLLGWK…YQRVETPVLP (167 aa)). An N6-acetyllysine modification is found at K19. Zn(2+) is bound by residues C74, C149, C161, and H166. Over residues 207-217 (PAGIEPQSNYI) the composition is skewed to polar residues. Positions 207 to 251 (PAGIEPQSNYIPETPPPGYISEDGETSDQQLNQSMDTGSPAELSP) are disordered. T220 carries the phosphothreonine modification. Positions 221-225 (PPPGY) match the PY-motif motif. Over residues 233 to 243 (SDQQLNQSMDT) the composition is skewed to polar residues. S240 carries the phosphoserine; by CAMK2 modification. Phosphoserine occurs at positions 245, 250, 255, 458, 460, and 464. The 194-residue stretch at 274-467 (WCSIAYYELN…SPSVRCSSMS (194 aa)) folds into the MH2 domain. Phosphoserine; by TGFBR1 occurs at positions 465 and 467.

The protein belongs to the dwarfin/SMAD family. As to quaternary structure, monomer; in the absence of TGF-beta. Heterodimer; in the presence of TGF-beta. Forms a heterodimer with co-SMAD, SMAD4, in the nucleus to form the transactivation complex SMAD2/SMAD4. Found in a complex with SMAD3 and TRIM33 upon addition of TGF-beta. Identified in a complex that contains at least ZNF451, SMAD2, SMAD3 and SMAD4. Interacts (via the MH2 domain) with ZFYVE9; may form trimers with the SMAD4 co-SMAD. Interacts with TAZ/WWRT1. Interacts with FOXH1. Interacts with SNW1. Interacts with CREB-binding protein (CBP) and EP300. Interacts with SNON. Interacts with ALK4/ACVR1B. Interacts with SKOR1. Interacts with SKOR2. Interacts with PRDM16. Interacts (via MH2 domain) with LEMD3. Interacts with RBPMS. Interacts with WWP1. Interacts (dephosphorylated form, via the MH1 and MH2 domains) with RANBP3 (via its C-terminal R domain); the interaction results in the export of dephosphorylated SMAD3 out of the nucleus and termination of the TGF-beta signaling. Interacts with PDPK1 (via PH domain). Interacts with DAB2; the interactions are enhanced upon TGF-beta stimulation. Interacts with USP15. Interacts with PPP5C. Interacts with LDLRAD4 (via the SMAD interaction motif). Interacts (via MH2 domain) with PMEPA1 (via the SMAD interaction motif). Interacts with ZFHX3. Interacts with ZNF451. Interacts with SMURF2 when phosphorylated on Ser-465/467. Interacts with PPM1A. Interacts with TGF-beta. Interacts with TGFBR1. Interacts with TGIF. Interacts with SMAD3 and TRIM33. Interacts with ZNF580. Interacts with NEDD4L in response to TGF-beta. Interacts with HGS. Interacts with AIP1. Interacts with WWP1. Interacts with PML. Interacts weakly with ZNF8. Interacts (when phosphorylated) with RNF111; RNF111 acts as an enhancer of the transcriptional responses by mediating ubiquitination and degradation of SMAD2 inhibitors. Interacts with YAP1 (when phosphorylated at 'Ser-112'). Interacts when phosphorylated with IPO7; the interaction facilitates translocation of SMAD2 to the nucleus. Interacts with MTMR4; negatively regulates TGF-beta signaling through SMAD2 dephosphorylation and retention in endosomes. In response to TGF-beta, phosphorylated on the C-terminal SXS motif by TGF-beta and activin type 1 receptor kinases, phosphorylation declines progressively in a KMT5A-dependent manner. Phosphorylation in this motif is required for interaction with a number of proteins including SMURF2, SNON and SMAD4 in response to TGF-beta. Dephosphorylated in this motif by PPM1A leading to disruption of the SMAD2/3-SMAD4 complex, nuclear export and termination of the TGF-beta signaling. In response to decorin, the naturally occurring inhibitor of TGF-beta signaling, phosphorylated on Ser-240 by CaMK2. Phosphorylated by MAPK3 upon EGF stimulation; which increases transcriptional activity and stability, and is blocked by calmodulin. Phosphorylated by PDPK1. In terms of processing, in response to TGF-beta, ubiquitinated by NEDD4L; which promotes its degradation. Monoubiquitinated, leading to prevent DNA-binding. Deubiquitination by USP15 alleviates inhibition and promotes activation of TGF-beta target genes. Ubiquitinated by RNF111, leading to its degradation: only SMAD2 proteins that are 'in use' are targeted by RNF111, RNF111 playing a key role in activating SMAD2 and regulating its turnover. Post-translationally, acetylated on Lys-19 by coactivators in response to TGF-beta signaling, which increases transcriptional activity.

It is found in the cytoplasm. The protein localises to the nucleus. In terms of biological role, receptor-regulated SMAD (R-SMAD) that is an intracellular signal transducer and transcriptional modulator activated by TGF-beta (transforming growth factor) and activin type 1 receptor kinases. Binds the TRE element in the promoter region of many genes that are regulated by TGF-beta and, on formation of the SMAD2/SMAD4 complex, activates transcription. Promotes TGFB1-mediated transcription of odontoblastic differentiation genes in dental papilla cells. Positively regulates PDPK1 kinase activity by stimulating its dissociation from the 14-3-3 protein YWHAQ which acts as a negative regulator. This Mus musculus (Mouse) protein is Mothers against decapentaplegic homolog 2 (Smad2).